Consider the following 24-residue polypeptide: 12 kDa protein (24 aa).

In Mycolicibacterium smegmatis (Mycobacterium smegmatis), this protein is 12 kDa protein.